A 302-amino-acid polypeptide reads, in one-letter code: Sulfate adenylyltransferase subunit 2 (302 aa).

This sequence belongs to the PAPS reductase family. CysD subfamily. Heterodimer composed of CysD, the smaller subunit, and CysN.

It catalyses the reaction sulfate + ATP + H(+) = adenosine 5'-phosphosulfate + diphosphate. Its pathway is sulfur metabolism; hydrogen sulfide biosynthesis; sulfite from sulfate: step 1/3. In terms of biological role, with CysN forms the ATP sulfurylase (ATPS) that catalyzes the adenylation of sulfate producing adenosine 5'-phosphosulfate (APS) and diphosphate, the first enzymatic step in sulfur assimilation pathway. APS synthesis involves the formation of a high-energy phosphoric-sulfuric acid anhydride bond driven by GTP hydrolysis by CysN coupled to ATP hydrolysis by CysD. The chain is Sulfate adenylyltransferase subunit 2 from Xanthomonas oryzae pv. oryzae (strain MAFF 311018).